The following is a 145-amino-acid chain: uncharacterized protein (145 aa).

The chain crosses the membrane as a helical span at residues F46–F66.

It is found in the membrane. This is an uncharacterized protein from Saccharomyces cerevisiae (strain ATCC 204508 / S288c) (Baker's yeast).